Here is a 128-residue protein sequence, read N- to C-terminus: Small ribosomal subunit protein uS9 (128 aa).

In terms of assembly, part of the 30S ribosomal subunit. Contacts proteins S7 and S10.

Its function is as follows. Part of the top of the head of the 30S subunit. The C-terminal region penetrates the head emerging in the P-site where it contacts tRNA. The polypeptide is Small ribosomal subunit protein uS9 (rpsI) (Thermus thermophilus (strain ATCC 27634 / DSM 579 / HB8)).